A 69-amino-acid polypeptide reads, in one-letter code: Large ribosomal subunit protein uL29 (69 aa).

Belongs to the universal ribosomal protein uL29 family.

The protein is Large ribosomal subunit protein uL29 of Staphylococcus haemolyticus (strain JCSC1435).